Reading from the N-terminus, the 456-residue chain is Methionine aminopeptidase 2 (456 aa).

A compositionally biased stretch (pro residues) spans 1-11 (MTIPVPKPAHP). Residues 1–127 (MTIPVPKPAH…SYRTTSSEKR (127 aa)) are disordered. The segment covering 31 to 45 (EADEEEDDDDEEGKE) has biased composition (acidic residues). Residues 66–79 (KKKKKKKKKPKKKK) show a composition bias toward basic residues. Position 209 (His-209) interacts with substrate. Residues Asp-229, Asp-240, and His-309 each contribute to the a divalent metal cation site. His-317 lines the substrate pocket. A divalent metal cation contacts are provided by Glu-343 and Glu-437.

This sequence belongs to the peptidase M24A family. Methionine aminopeptidase eukaryotic type 2 subfamily. Requires Co(2+) as cofactor. The cofactor is Zn(2+). Mn(2+) serves as cofactor. Fe(2+) is required as a cofactor.

The protein resides in the cytoplasm. It carries out the reaction Release of N-terminal amino acids, preferentially methionine, from peptides and arylamides.. Its function is as follows. Cotranslationally removes the N-terminal methionine from nascent proteins. The N-terminal methionine is often cleaved when the second residue in the primary sequence is small and uncharged (Met-Ala-, Cys, Gly, Pro, Ser, Thr, or Val). This is Methionine aminopeptidase 2 from Puccinia graminis f. sp. tritici (strain CRL 75-36-700-3 / race SCCL) (Black stem rust fungus).